The chain runs to 296 residues: NADH-cytochrome b5 reductase 2 (296 aa).

A helical transmembrane segment spans residues 12–29 (LPIALGVGAASIATAIIL). The region spanning 47–151 (NEWIDLPIIK…KGPITKWEWK (105 aa)) is the FAD-binding FR-type domain. An FAD-binding site is contributed by 154 to 189 (SYDSITLLGAGTGINPLYQLVHHIAENPEDNTKIHL).

Belongs to the flavoprotein pyridine nucleotide cytochrome reductase family. It depends on FAD as a cofactor.

The protein resides in the mitochondrion outer membrane. It catalyses the reaction 2 Fe(III)-[cytochrome b5] + NADH = 2 Fe(II)-[cytochrome b5] + NAD(+) + H(+). Functionally, may mediate the reduction of outer membrane cytochrome b5. This is NADH-cytochrome b5 reductase 2 (MCR1) from Kluyveromyces lactis (strain ATCC 8585 / CBS 2359 / DSM 70799 / NBRC 1267 / NRRL Y-1140 / WM37) (Yeast).